A 584-amino-acid polypeptide reads, in one-letter code: uncharacterized protein (584 aa).

Disordered regions lie at residues 151–188 (EHPPPRKMTSSEKTRSENRERKKRWREQNEERNKDNDL), 222–243 (KRKEKERACLSQNQSSNASRAN), 399–418 (SETPTPVSGNGNVADAPPDF), and 433–584 (MQPS…AKSD). Over residues 159–188 (TSSEKTRSENRERKKRWREQNEERNKDNDL) the composition is skewed to basic and acidic residues. Residues 231–243 (LSQNQSSNASRAN) are compositionally biased toward low complexity. Composition is skewed to polar residues over residues 399 to 409 (SETPTPVSGNG), 433 to 453 (MQPSAVSSPMSESHVQISSEM), 483 to 500 (NAVTTPSSPYDGAQSGSP), 511 to 531 (NYSQAQSPNLATPSPSFSSLP), and 572 to 584 (QRSSSKNGTAKSD).

This is an uncharacterized protein from Schizosaccharomyces pombe (strain 972 / ATCC 24843) (Fission yeast).